We begin with the raw amino-acid sequence, 316 residues long: 2,3-dihydroxyphenylpropionate/2,3-dihydroxicinnamic acid 1,2-dioxygenase (316 aa).

Catalysis depends on His118, which acts as the Proton donor. His182 serves as the catalytic Proton acceptor.

This sequence belongs to the LigB/MhpB extradiol dioxygenase family. As to quaternary structure, homotetramer. Fe(2+) serves as cofactor.

It carries out the reaction 3-(2,3-dihydroxyphenyl)propanoate + O2 = (2Z,4E)-2-hydroxy-6-oxonona-2,4-dienedioate + H(+). It catalyses the reaction (2E)-3-(2,3-dihydroxyphenyl)prop-2-enoate + O2 = (2Z,4E,7E)-2-hydroxy-6-oxonona-2,4,7-trienedioate + H(+). It participates in aromatic compound metabolism; 3-phenylpropanoate degradation. Catalyzes the non-heme iron(II)-dependent oxidative cleavage of 2,3-dihydroxyphenylpropionic acid and 2,3-dihydroxicinnamic acid into 2-hydroxy-6-ketononadienedioate and 2-hydroxy-6-ketononatrienedioate, respectively. The polypeptide is 2,3-dihydroxyphenylpropionate/2,3-dihydroxicinnamic acid 1,2-dioxygenase (Mycolicibacterium vanbaalenii (strain DSM 7251 / JCM 13017 / BCRC 16820 / KCTC 9966 / NRRL B-24157 / PYR-1) (Mycobacterium vanbaalenii)).